Consider the following 350-residue polypeptide: MSQSVPSFQIEPVSKAQDQFIQQKIDLKTKPPGALGLLEPLALQIARIQGPQQLQIVNPTMLVFAGDHGIAAEGVSIAPSEVTRQMVQNFAHGGAAINVFCRQLGFNLEVIDCGILTPVEGVEGIIDQRLGAGTGAIHLEPAMSLACVDKGFAMAQALIERHHQAGCNLVAFGEMGIGNTSSAAAIMAAIMQLDVADCVGRGTGISSETLERKQMLIELALLLHQSAMTGPKQVLACLGGFEIVQMTGAMLAAAERKMLVVVDGFIATAAALVAVTINAHVRDYLIFAHRSEEQGHQRMLEHLKAKPLLSLGLRLGEGTGAALALPLIQAAVNFYNQMASFSDAGIEAVV.

E317 acts as the Proton acceptor in catalysis.

This sequence belongs to the CobT family.

The enzyme catalyses 5,6-dimethylbenzimidazole + nicotinate beta-D-ribonucleotide = alpha-ribazole 5'-phosphate + nicotinate + H(+). Its pathway is nucleoside biosynthesis; alpha-ribazole biosynthesis; alpha-ribazole from 5,6-dimethylbenzimidazole: step 1/2. In terms of biological role, catalyzes the synthesis of alpha-ribazole-5'-phosphate from nicotinate mononucleotide (NAMN) and 5,6-dimethylbenzimidazole (DMB). The protein is Nicotinate-nucleotide--dimethylbenzimidazole phosphoribosyltransferase of Shewanella sp. (strain MR-7).